Consider the following 116-residue polypeptide: Large ribosomal subunit protein uL18 (116 aa).

The protein belongs to the universal ribosomal protein uL18 family. Part of the 50S ribosomal subunit; part of the 5S rRNA/L5/L18/L25 subcomplex. Contacts the 5S and 23S rRNAs.

Its function is as follows. This is one of the proteins that bind and probably mediate the attachment of the 5S RNA into the large ribosomal subunit, where it forms part of the central protuberance. The chain is Large ribosomal subunit protein uL18 from Hahella chejuensis (strain KCTC 2396).